The chain runs to 326 residues: Biotin synthase (326 aa).

The region spanning Asn-47–Arg-274 is the Radical SAM core domain. [4Fe-4S] cluster is bound by residues Cys-62, Cys-66, and Cys-69. [2Fe-2S] cluster contacts are provided by Cys-106, Cys-137, Cys-197, and Arg-269.

This sequence belongs to the radical SAM superfamily. Biotin synthase family. Homodimer. The cofactor is [4Fe-4S] cluster. It depends on [2Fe-2S] cluster as a cofactor.

It catalyses the reaction (4R,5S)-dethiobiotin + (sulfur carrier)-SH + 2 reduced [2Fe-2S]-[ferredoxin] + 2 S-adenosyl-L-methionine = (sulfur carrier)-H + biotin + 2 5'-deoxyadenosine + 2 L-methionine + 2 oxidized [2Fe-2S]-[ferredoxin]. The protein operates within cofactor biosynthesis; biotin biosynthesis; biotin from 7,8-diaminononanoate: step 2/2. Catalyzes the conversion of dethiobiotin (DTB) to biotin by the insertion of a sulfur atom into dethiobiotin via a radical-based mechanism. This Methylococcus capsulatus (strain ATCC 33009 / NCIMB 11132 / Bath) protein is Biotin synthase.